The following is a 350-amino-acid chain: Quinolinate phosphoribosyltransferase [decarboxylating] 1b (350 aa).

Substrate is bound by residues R141, 172 to 174, R196, K206, E239, D266, 298 to 300, and 319 to 321; these read TRK, SGN, and SGA.

Belongs to the NadC/ModD family.

The catalysed reaction is nicotinate beta-D-ribonucleotide + CO2 + diphosphate = quinolinate + 5-phospho-alpha-D-ribose 1-diphosphate + 2 H(+). Its pathway is alkaloid biosynthesis; nicotine biosynthesis. It participates in cofactor biosynthesis; NAD(+) biosynthesis; nicotinate D-ribonucleotide from quinolinate: step 1/1. Involved in the biosynthesis of pyridine alkaloid natural products, leading mainly to the production of anabasine, anatabine, nicotine and nornicotine, effective deterrents against herbivores with antiparasitic and pesticide properties (neurotoxins); nornicotine serves as the precursor in the synthesis of the carcinogen compound N'-nitrosonornicotine (NNN). Involved in the catabolism of quinolinic acid (QA). This is Quinolinate phosphoribosyltransferase [decarboxylating] 1b from Nicotiana tabacum (Common tobacco).